A 369-amino-acid polypeptide reads, in one-letter code: C-C chemokine receptor type 9 (369 aa).

Residues 1–48 (MMPTELTSLIPGMFDDFSYDSTASTDDYMNLNFSSFFCKKNNVRQFAS) are Extracellular-facing. Residue Asn32 is glycosylated (N-linked (GlcNAc...) asparagine). Disulfide bonds link Cys38–Cys289 and Cys119–Cys198. A helical transmembrane segment spans residues 49–74 (HFLPPLYWLVFIVGTLGNSLVILVYW). The Cytoplasmic segment spans residues 75-85 (YCTRVKTMTDM). The chain crosses the membrane as a helical span at residues 86–109 (FLLNLAIADLLFLATLPFWAIAAA). Residues 110–120 (GQWMFQTFMCK) lie on the Extracellular side of the membrane. The helical transmembrane segment at 121-150 (VVNSMYKMNFYSCVLLIMCISVDRYIAIVQ) threads the bilayer. At 151–159 (AMKAQVWRQ) the chain is on the cytoplasmic side. Residues 160–185 (KRLLYSKMVCITIWVMAAVLCTPEIL) traverse the membrane as a helical segment. Topologically, residues 186 to 208 (YSQVSGESGIATCTMVYPKDKNA) are extracellular. A helical membrane pass occupies residues 209–243 (KLKSAVLILKVTLGFFLPFMVMAFCYTIIIHTLVQ). Residues 244–248 (AKKSS) lie on the Cytoplasmic side of the membrane. Residues 249-283 (KHKALKVTITVLTVFIMSQFPYNSILVVQAVDAYA) traverse the membrane as a helical segment. Topologically, residues 284–290 (MFISNCT) are extracellular. Residues 291-321 (ISTNIDICFQVTQTIAFFHSCLNPVLYVFVG) traverse the membrane as a helical segment. Topologically, residues 322–369 (ERFRRDLVKTLKNLGCISQAQWVSFTRREGSLKLSSMLLETTSGALSL) are cytoplasmic.

This sequence belongs to the G-protein coupled receptor 1 family. In terms of tissue distribution, highly expressed in the thymus and low in lymph nodes and spleen.

It localises to the cell membrane. Its function is as follows. Receptor for chemokine SCYA25/TECK. Subsequently transduces a signal by increasing the intracellular calcium ions level. The sequence is that of C-C chemokine receptor type 9 (Ccr9) from Mus musculus (Mouse).